Reading from the N-terminus, the 173-residue chain is Alpha-crystallin A chain (173 aa).

M1 carries the N-acetylmethionine modification. Residues 1-63 (MDIAIQHPWF…RSVLDSGVSE (63 aa)) form a required for complex formation with BFSP1 and BFSP2 region. At Q6 the chain carries Deamidated glutamine; partial. S45 is subject to Phosphoserine. Q50 carries the deamidated glutamine; partial modification. Residues 52–162 (LFRSVLDSGV…GHSERAIPVS (111 aa)) enclose the sHSP domain. The residue at position 70 (K70) is an N6-acetyllysine. Residue Q90 is modified to Deamidated glutamine; partial. The residue at position 99 (K99) is an N6-acetyllysine. H100 is a Zn(2+) binding site. Position 101 is a deamidated asparagine; partial (N101). Residues E102 and H107 each contribute to the Zn(2+) site. S122 carries the phosphoserine modification. The residue at position 123 (N123) is a Deamidated asparagine; partial. The tract at residues 144-173 (PKIPSGMDAGHSERAIPVSREEKPSSAPSS) is disordered. Basic and acidic residues predominate over residues 153–167 (GHSERAIPVSREEKP). Position 154 (H154) interacts with Zn(2+). An O-linked (GlcNAc) serine glycan is attached at S162.

The protein belongs to the small heat shock protein (HSP20) family. In terms of assembly, heteromer composed of three CRYAA and one CRYAB subunits. Inter-subunit bridging via zinc ions enhances stability, which is crucial as there is no protein turn over in the lens. Can also form homodimers and homotetramers (dimers of dimers) which serve as the building blocks of homooligomers. Within homooligomers, the zinc-binding motif is created from residues of 3 different molecules. His-100 and Glu-102 from one molecule are ligands of the zinc ion, and His-107 and His-154 residues from additional molecules complete the site with tetrahedral coordination geometry. Part of a complex required for lens intermediate filament formation composed of BFSP1, BFSP2 and CRYAA. Post-translationally, acetylation at Lys-70 may increase chaperone activity. Undergoes age-dependent proteolytical cleavage at the C-terminus.

The protein localises to the cytoplasm. The protein resides in the nucleus. Functionally, contributes to the transparency and refractive index of the lens. Acts as a chaperone, preventing aggregation of various proteins under a wide range of stress conditions. Required for the correct formation of lens intermediate filaments as part of a complex composed of BFSP1, BFSP2 and CRYAA. The sequence is that of Alpha-crystallin A chain (CRYAA) from Ceratotherium simum (White rhinoceros).